A 351-amino-acid chain; its full sequence is Ion-translocating oxidoreductase complex subunit D (351 aa).

4 consecutive transmembrane segments (helical) span residues 18–38 (IMLL…YFFG), 40–60 (GSLI…GAVL), 87–107 (LPPL…IVIA), and 121–141 (PAMV…TSWL). Residue threonine 185 is modified to FMN phosphoryl threonine. 5 helical membrane-spanning segments follow: residues 211-231 (VLAG…GLLL), 241-261 (IPVS…MIAP), 264-284 (FASP…FFIA), 298-318 (LIFG…GGYP), and 320-340 (GVAF…HYTQ).

Belongs to the NqrB/RnfD family. The complex is composed of six subunits: RnfA, RnfB, RnfC, RnfD, RnfE and RnfG. FMN serves as cofactor.

The protein resides in the cell inner membrane. In terms of biological role, part of a membrane-bound complex that couples electron transfer with translocation of ions across the membrane. The polypeptide is Ion-translocating oxidoreductase complex subunit D (Yersinia pseudotuberculosis serotype I (strain IP32953)).